The sequence spans 174 residues: ATP synthase subunit delta (174 aa).

Belongs to the ATPase delta chain family. As to quaternary structure, F-type ATPases have 2 components, F(1) - the catalytic core - and F(0) - the membrane proton channel. F(1) has five subunits: alpha(3), beta(3), gamma(1), delta(1), epsilon(1). F(0) has three main subunits: a(1), b(2) and c(10-14). The alpha and beta chains form an alternating ring which encloses part of the gamma chain. F(1) is attached to F(0) by a central stalk formed by the gamma and epsilon chains, while a peripheral stalk is formed by the delta and b chains.

The protein resides in the cell inner membrane. F(1)F(0) ATP synthase produces ATP from ADP in the presence of a proton or sodium gradient. F-type ATPases consist of two structural domains, F(1) containing the extramembraneous catalytic core and F(0) containing the membrane proton channel, linked together by a central stalk and a peripheral stalk. During catalysis, ATP synthesis in the catalytic domain of F(1) is coupled via a rotary mechanism of the central stalk subunits to proton translocation. Its function is as follows. This protein is part of the stalk that links CF(0) to CF(1). It either transmits conformational changes from CF(0) to CF(1) or is implicated in proton conduction. This Helicobacter hepaticus (strain ATCC 51449 / 3B1) protein is ATP synthase subunit delta.